The following is a 622-amino-acid chain: Chaperone protein HscA homolog (622 aa).

This sequence belongs to the heat shock protein 70 family.

Its function is as follows. Chaperone involved in the maturation of iron-sulfur cluster-containing proteins. Has a low intrinsic ATPase activity which is markedly stimulated by HscB. This chain is Chaperone protein HscA homolog, found in Acidovorax ebreus (strain TPSY) (Diaphorobacter sp. (strain TPSY)).